Reading from the N-terminus, the 369-residue chain is Anhydro-N-acetylmuramic acid kinase (369 aa).

12–19 (GTSLDGVD) contacts ATP.

This sequence belongs to the anhydro-N-acetylmuramic acid kinase family.

It carries out the reaction 1,6-anhydro-N-acetyl-beta-muramate + ATP + H2O = N-acetyl-D-muramate 6-phosphate + ADP + H(+). Its pathway is amino-sugar metabolism; 1,6-anhydro-N-acetylmuramate degradation. It participates in cell wall biogenesis; peptidoglycan recycling. Functionally, catalyzes the specific phosphorylation of 1,6-anhydro-N-acetylmuramic acid (anhMurNAc) with the simultaneous cleavage of the 1,6-anhydro ring, generating MurNAc-6-P. Is required for the utilization of anhMurNAc either imported from the medium or derived from its own cell wall murein, and thus plays a role in cell wall recycling. The chain is Anhydro-N-acetylmuramic acid kinase from Shigella flexneri serotype 5b (strain 8401).